We begin with the raw amino-acid sequence, 154 residues long: Ribonuclease K6 (154 aa).

A signal peptide spans methionine 1–alanine 27. Histidine 42 (proton acceptor) is an active-site residue. 4 disulfides stabilise this stretch: cysteine 50–cysteine 108, cysteine 64–cysteine 118, cysteine 82–cysteine 133, and cysteine 89–cysteine 96. Asparagine 59 is a glycosylation site (N-linked (GlcNAc...) asparagine). Residues lysine 65–threonine 69 and lysine 90 each bind substrate. Asparagine 104 carries an N-linked (GlcNAc...) asparagine glycan. Histidine 149 serves as the catalytic Proton donor.

It belongs to the pancreatic ribonuclease family. Interacts (via N-terminus) with bacterial lipopolysaccharide (LPS). Kidney (at protein level).

The protein localises to the secreted. It localises to the lysosome. It is found in the cytoplasmic granule. Its function is as follows. Ribonuclease which shows a preference for the pyrimidines uridine and cytosine. Has potent antimicrobial activity against a range of Gram-positive and Gram-negative bacteria, including P.aeruginosa, A.baumanii, M.luteus, S.aureus, E.faecalis, E.faecium, S.saprophyticus and E.coli. Causes loss of bacterial membrane integrity, and also promotes agglutination of Gram-negative bacteria. Probably contributes to urinary tract sterility. Bactericidal activity is independent of RNase activity. The protein is Ribonuclease K6 (RNASE6) of Bos taurus (Bovine).